The chain runs to 733 residues: Phosphoribosylformylglycinamidine synthase subunit PurL (733 aa).

The active site involves histidine 41. Tyrosine 44 and lysine 83 together coordinate ATP. Glutamate 85 is a Mg(2+) binding site. Substrate contacts are provided by residues 86–89 (SHNH) and arginine 108. The active-site Proton acceptor is histidine 87. Residue aspartate 109 coordinates Mg(2+). A disordered region spans residues 212–232 (GASFASQELSEESEEKRPSVQ). Position 232 (glutamine 232) interacts with substrate. Aspartate 260 is a binding site for Mg(2+). 304–306 (ESQ) lines the substrate pocket. Residues aspartate 488 and glycine 525 each contribute to the ATP site. Asparagine 526 lines the Mg(2+) pocket. Residue serine 528 participates in substrate binding.

The protein belongs to the FGAMS family. As to quaternary structure, monomer. Part of the FGAM synthase complex composed of 1 PurL, 1 PurQ and 2 PurS subunits.

It is found in the cytoplasm. It catalyses the reaction N(2)-formyl-N(1)-(5-phospho-beta-D-ribosyl)glycinamide + L-glutamine + ATP + H2O = 2-formamido-N(1)-(5-O-phospho-beta-D-ribosyl)acetamidine + L-glutamate + ADP + phosphate + H(+). Its pathway is purine metabolism; IMP biosynthesis via de novo pathway; 5-amino-1-(5-phospho-D-ribosyl)imidazole from N(2)-formyl-N(1)-(5-phospho-D-ribosyl)glycinamide: step 1/2. Part of the phosphoribosylformylglycinamidine synthase complex involved in the purines biosynthetic pathway. Catalyzes the ATP-dependent conversion of formylglycinamide ribonucleotide (FGAR) and glutamine to yield formylglycinamidine ribonucleotide (FGAM) and glutamate. The FGAM synthase complex is composed of three subunits. PurQ produces an ammonia molecule by converting glutamine to glutamate. PurL transfers the ammonia molecule to FGAR to form FGAM in an ATP-dependent manner. PurS interacts with PurQ and PurL and is thought to assist in the transfer of the ammonia molecule from PurQ to PurL. In Caldanaerobacter subterraneus subsp. tengcongensis (strain DSM 15242 / JCM 11007 / NBRC 100824 / MB4) (Thermoanaerobacter tengcongensis), this protein is Phosphoribosylformylglycinamidine synthase subunit PurL.